The primary structure comprises 517 residues: Bifunctional purine biosynthesis protein PurH (517 aa).

An MGS-like domain is found at M1–V145.

The protein belongs to the PurH family.

The catalysed reaction is (6R)-10-formyltetrahydrofolate + 5-amino-1-(5-phospho-beta-D-ribosyl)imidazole-4-carboxamide = 5-formamido-1-(5-phospho-D-ribosyl)imidazole-4-carboxamide + (6S)-5,6,7,8-tetrahydrofolate. The enzyme catalyses IMP + H2O = 5-formamido-1-(5-phospho-D-ribosyl)imidazole-4-carboxamide. Its pathway is purine metabolism; IMP biosynthesis via de novo pathway; 5-formamido-1-(5-phospho-D-ribosyl)imidazole-4-carboxamide from 5-amino-1-(5-phospho-D-ribosyl)imidazole-4-carboxamide (10-formyl THF route): step 1/1. It participates in purine metabolism; IMP biosynthesis via de novo pathway; IMP from 5-formamido-1-(5-phospho-D-ribosyl)imidazole-4-carboxamide: step 1/1. This is Bifunctional purine biosynthesis protein PurH from Prochlorococcus marinus (strain MIT 9515).